The sequence spans 81 residues: ATP synthase subunit c (81 aa).

The next 2 helical transmembrane spans lie at 6 to 26 and 57 to 77; these read AAAS…GPGF and LAFM…LLFA.

It belongs to the ATPase C chain family. In terms of assembly, F-type ATPases have 2 components, F(1) - the catalytic core - and F(0) - the membrane proton channel. F(1) has five subunits: alpha(3), beta(3), gamma(1), delta(1), epsilon(1). F(0) has four main subunits: a(1), b(1), b'(1) and c(10-14). The alpha and beta chains form an alternating ring which encloses part of the gamma chain. F(1) is attached to F(0) by a central stalk formed by the gamma and epsilon chains, while a peripheral stalk is formed by the delta, b and b' chains.

It is found in the cellular thylakoid membrane. Its function is as follows. F(1)F(0) ATP synthase produces ATP from ADP in the presence of a proton or sodium gradient. F-type ATPases consist of two structural domains, F(1) containing the extramembraneous catalytic core and F(0) containing the membrane proton channel, linked together by a central stalk and a peripheral stalk. During catalysis, ATP synthesis in the catalytic domain of F(1) is coupled via a rotary mechanism of the central stalk subunits to proton translocation. Functionally, key component of the F(0) channel; it plays a direct role in translocation across the membrane. A homomeric c-ring of between 10-14 subunits forms the central stalk rotor element with the F(1) delta and epsilon subunits. The chain is ATP synthase subunit c from Rippkaea orientalis (strain PCC 8801 / RF-1) (Cyanothece sp. (strain PCC 8801)).